The following is a 507-amino-acid chain: Cytochrome P450 monooxygenase helB2 (507 aa).

The N-terminal stretch at Met-1 to Ala-22 is a signal peptide. Residue Cys-436 participates in heme binding.

The protein belongs to the cytochrome P450 family. Requires heme as cofactor.

Its pathway is mycotoxin biosynthesis. Functionally, cytochrome P450 monooxygenase; part of the gene cluster that mediates the biosynthesis of helvolic acid, an antibacterial nortriterpenoid. Protostadienol synthase helA cyclizes (3S)-oxidosqualene to (17Z)-protosta-17(20),24-dien-3-beta-ol (protostadienol). The synthesis of protostadienol is followed by several steps of monooxygenation, dehydrogenation, and acyl transfer to yield the final helvolic acid. Following the cyclization to the tetracyclic protostadienol by helA, cytochrome P450 monooxygenases helB1-mediated and helB2-mediated oxidation at C-4 and C-16, acyltransferase helD2-dependent acetylation of 16-OH, oxidation of C-21 by cytochrome P450 monooxygenase helB4, and short chain dehydrogenase helC-dependent oxidative decarboxylation yield the fusidane skeleton. This intermediate is further modified in three additional steps mediated by the cytochrome P450 monooxygenase helB3, the acyltransferase helD1, and the 3-ketosteroid 1-dehydrogenase helE to give helvolic acid. Compared with the late stages in the biosynthesis of helvolic acid, enzymes involved in the early stage modifications act in a relatively strict order. The hydroxylation of C-16 by helB1 and subsequent acetylation by helD2 should occur before the helB3-mediated oxidation of C-21. C-4 demethylation in fusidane-type antibiotics proceeds in an unusual manner though it is also achieved by oxidative decarboxylation. The methyl group at C-4 beta position is oxidized by helB1 and subsequently removed by the short chain dehydrogenase helC. In Aspergillus fumigatus (strain ATCC MYA-4609 / CBS 101355 / FGSC A1100 / Af293) (Neosartorya fumigata), this protein is Cytochrome P450 monooxygenase helB2.